Reading from the N-terminus, the 428-residue chain is Cell division protein FtsZ (428 aa).

GTP-binding positions include 73-77, 160-162, glutamate 191, arginine 195, and aspartate 239; these read GGGGN and GTG. Residues 378-428 are disordered; that stretch reads NAANARVVSAPPKRTPTQTPLTNSPAPTPEPKEKSGLDIPDFLQRRRPPKN. Polar residues predominate over residues 392–402; it reads TPTQTPLTNSP.

It belongs to the FtsZ family. In terms of assembly, homodimer. Polymerizes to form a dynamic ring structure in a strictly GTP-dependent manner. Interacts directly with several other division proteins.

The protein resides in the cytoplasm. Its function is as follows. Essential cell division protein that forms a contractile ring structure (Z ring) at the future cell division site. The regulation of the ring assembly controls the timing and the location of cell division. One of the functions of the FtsZ ring is to recruit other cell division proteins to the septum to produce a new cell wall between the dividing cells. Binds GTP and shows GTPase activity. The chain is Cell division protein FtsZ from Nostoc sp. (strain PCC 7120 / SAG 25.82 / UTEX 2576).